The sequence spans 89 residues: Large ribosomal subunit protein eL43 (89 aa).

The tract at residues 1-28 (MVKKSKVGSTGRFGARYGRKAKRTVKDI) is disordered. The C4-type zinc-finger motif lies at 38 to 59 (CPKCDRPGVKRTHAGIWKCRKC).

The protein belongs to the eukaryotic ribosomal protein eL43 family. Requires Zn(2+) as cofactor.

The protein is Large ribosomal subunit protein eL43 of Methanosphaera stadtmanae (strain ATCC 43021 / DSM 3091 / JCM 11832 / MCB-3).